A 364-amino-acid polypeptide reads, in one-letter code: Fructose-1,6-bisphosphatase class 1 2 (364 aa).

Glutamate 101, aspartate 123, leucine 125, and aspartate 126 together coordinate Mg(2+). Substrate is bound by residues 126-129 (DGSS) and asparagine 218. Glutamate 290 serves as a coordination point for Mg(2+).

This sequence belongs to the FBPase class 1 family. In terms of assembly, homotetramer. Mg(2+) serves as cofactor.

Its subcellular location is the cytoplasm. It carries out the reaction beta-D-fructose 1,6-bisphosphate + H2O = beta-D-fructose 6-phosphate + phosphate. It functions in the pathway carbohydrate biosynthesis; gluconeogenesis. The sequence is that of Fructose-1,6-bisphosphatase class 1 2 from Cupriavidus taiwanensis (strain DSM 17343 / BCRC 17206 / CCUG 44338 / CIP 107171 / LMG 19424 / R1) (Ralstonia taiwanensis (strain LMG 19424)).